The primary structure comprises 90 residues: UPF0367 protein SYNPCC7002_A0153 (90 aa).

Belongs to the UPF0367 family.

The chain is UPF0367 protein SYNPCC7002_A0153 from Picosynechococcus sp. (strain ATCC 27264 / PCC 7002 / PR-6) (Agmenellum quadruplicatum).